Consider the following 328-residue polypeptide: MDYIKQAESTQLSSLSLSRLEGNNAEESKRLLEACAQDGFFYLDLRDHKQLLVDYEALLEIIKQYFNEPLDQKMKDDRKSDTIGYEPVATSAGVLDGLPDYYESFKVSWNQLRDHVQELPTVVETNIEVFDRFAKYVHSILLMILSRLSQTMGRNNDNRFESYHRDSIATRTNLTFLKYPKQDTTEHGVGHNKHTDVGTLTFLLSGQRGLQRLTPEGWCHVEPRSGFAVVNVGDSLRFLSDCVLSSVIHRVLPVGAHQTEDRYTLAYFLRPEDDAVFKDINGNLVSARSWHDRKFDHFRASHNQQKNDTILMGGMEENQKFLQYKFQA.

A Fe2OG dioxygenase domain is found at 170-271 (TRTNLTFLKY…RYTLAYFLRP (102 aa)). Fe cation contacts are provided by H194, D196, and H249. R262 contacts 2-oxoglutarate.

It belongs to the iron/ascorbate-dependent oxidoreductase family. Fe(2+) serves as cofactor.

It participates in mycotoxin biosynthesis. 2-oxoglutarate-dependent dioxygenase; part of the gene cluster that mediates the biosynthesis of pneumocandins, lipohexapeptides of the echinocandin family that prevent fungal cell wall formation by non-competitive inhibition of beta-1,3-glucan synthase. The 10,12-dimethylmyristoyl side chain is synthesized by the reducing polyketide synthase gloL/GLPKS4. The thioesterase gloN/GLHYD exclusively interacts with gloL/GLPKS4 to maintain turnover of the polyketide side chain. The 10R,12S-dimethylmyristic acid is then transferred to the first thiolation domain of the nonribosomal peptide synthetase gloA/GLNRPS4 by the acyl-AMP ligase gloD/GLligase, followed by its acylation to L-ornithine to trigger elongation of the cyclic hexapeptide. L-ornithine, 4R-hydroxyl-L-proline (generated from L-proline by the dioxygenase gloF/GLOXY2), 3S-hydroxyl-L-homotyrosine (generated by gloG/GLHtyB, gloH/GLHtyA, gloI/GLHtyC, gloJ/GLHtyD and hydroxylated at C-3 by the dioxygenase gloM/GLOXY1), 3R-hydroxyl-L-glutamine (generated from L-glutamine probably by the dioxygenase gloE/GLOXY3) and 3S-hydroxyl-L-proline (generated from L-proline by the dioxygenase gloF/GLOXY2 to yield pneumocandin B0), or 3S-hydroxyl-4S-methyl-L-proline (generated from L-leucine by the dioxygenase gloC/GLOXY4 to yield pneumocandin A0) are sequentially added to the growing chain. The last C domain of gloA/GLNRPS4 is proposed to be responsible for cyclization by condensation to form the peptide bond between L-ornithine and 3S-hydroxyl-4S-methyl-L-proline (for pneumocandin A0) or 3S-hydroxyl-L-proline (for pneumocandin B0). Finally, the subsequent C-4 hydroxylation of 3S-hydroxyl-L-homotyrosine and L-ornithine dihydroxylation at C-4 and C-5 are performed by the cytochrome P450 monooxygenases gloP/GLP450-1 and gloO/GLP450-2, respectively. The protein is 2-oxoglutarate-dependent dioxygenase gloE of Glarea lozoyensis (strain ATCC 20868 / MF5171).